The sequence spans 315 residues: MMTIQRYSLVFCAIFATCWTASVVNNKQVIDTSVPQTETTLNDADFHSDLHQRYDLQTLGIKVKDDPTIGNYSEGDILLESPKKFVEENNKLGRNAIKQIYRRWPNNEIPYTLSSQYGSYARSVIANAMNEYHTKTCVKFVARDPSKHHDYLWIHPDEGCYSLVGKTGGKQPVSLDSGCIQVGTIVHELMHAVGFFHEQSRQDRDSYIDVVWQNVMNGADDQFEKYNLNVISHLDEPYDYASIMHYGPYAFSGSGKKTLVPKKSGSERMGQRVKFSDIDVRKINKLYNCPGVSGNNNNNNNNQINSNSIVNHPQV.

An N-terminal signal peptide occupies residues 1–20 (MMTIQRYSLVFCAIFATCWT). An N-linked (GlcNAc...) asparagine glycan is attached at Asn-71. The region spanning 95 to 290 (NAIKQIYRRW…RKINKLYNCP (196 aa)) is the Peptidase M12A domain. 2 cysteine pairs are disulfide-bonded: Cys-137–Cys-289 and Cys-160–Cys-179. Position 187 (His-187) interacts with Zn(2+). The active site involves Glu-188. The Zn(2+) site is built by His-191 and His-197. The interval 291-315 (GVSGNNNNNNNNQINSNSIVNHPQV) is disordered.

It depends on Zn(2+) as a cofactor. As to expression, digestive tract. Found in the pharynx cells of the procorpus, metacorpus, isthmus and terminal bulb, and in the terminal bulb lumen.

The protein resides in the secreted. Functionally, metalloprotease. May be involved in digestion. In Caenorhabditis elegans, this protein is Zinc metalloproteinase nas-4 (nas-4).